A 449-amino-acid polypeptide reads, in one-letter code: GTPase Der (449 aa).

2 consecutive EngA-type G domains span residues 3–167 and 175–350; these read SIVA…PDEP and TNIA…EQYS. GTP is bound by residues 9-16, 56-60, 119-122, 181-188, 228-232, and 293-296; these read GRPNVGKS, DTGGF, NKVD, DTAGI, and NKWD. In terms of domain architecture, KH-like spans 351–435; the sequence is RRVTTSELNR…PFRLLFRGRE (85 aa).

Belongs to the TRAFAC class TrmE-Era-EngA-EngB-Septin-like GTPase superfamily. EngA (Der) GTPase family. In terms of assembly, associates with the 50S ribosomal subunit.

GTPase that plays an essential role in the late steps of ribosome biogenesis. This Trichlorobacter lovleyi (strain ATCC BAA-1151 / DSM 17278 / SZ) (Geobacter lovleyi) protein is GTPase Der.